We begin with the raw amino-acid sequence, 348 residues long: Pheromone P-factor receptor (348 aa).

7 consecutive transmembrane segments (helical) span residues 46–69 (LLTG…VCLL), 79–103 (VFVF…TICS), 125–141 (VFNI…IFTA), 162–180 (IMTV…FWIT), 207–225 (YFIA…SGVF), 249–267 (CILV…FTII), and 283–301 (CLLI…STAL).

This sequence belongs to the G-protein coupled receptor 4 family.

The protein localises to the membrane. Receptor for the peptide pheromone P-factor, a mating factor of S.pombe. Pheromone signaling is essential for initiation of meiosis in S.pombe; P-factor signaling alone may be sufficient. This Schizosaccharomyces pombe (strain 972 / ATCC 24843) (Fission yeast) protein is Pheromone P-factor receptor (mam2).